A 188-amino-acid chain; its full sequence is Peptidyl-prolyl cis-trans isomerase (188 aa).

An N-terminal signal peptide occupies residues 1–20 (MLKRVAIVLGGLLISAHALA). Residues 21–181 (NTMVEMKTNL…QPVKIISVQI (161 aa)) form the PPIase cyclophilin-type domain.

It belongs to the cyclophilin-type PPIase family.

The protein resides in the periplasm. The enzyme catalyses [protein]-peptidylproline (omega=180) = [protein]-peptidylproline (omega=0). In terms of biological role, PPIases accelerate the folding of proteins. It catalyzes the cis-trans isomerization of proline imidic peptide bonds in oligopeptides. This protein is not essential for growth. Presumably plays a role in signal transduction. The chain is Peptidyl-prolyl cis-trans isomerase (rotA) from Acinetobacter baylyi (strain ATCC 33305 / BD413 / ADP1).